Here is a 245-residue protein sequence, read N- to C-terminus: Eukaryotic translation initiation factor 6 (245 aa).

Phosphoserine; by CK1 is present on residues Ser-174 and Ser-175.

The protein belongs to the eIF-6 family. Monomer. Associates with the 60S ribosomal subunit. Post-translationally, phosphorylation at Ser-174 and Ser-175 promotes nuclear export.

It localises to the cytoplasm. It is found in the nucleus. The protein localises to the nucleolus. Functionally, binds to the 60S ribosomal subunit and prevents its association with the 40S ribosomal subunit to form the 80S initiation complex in the cytoplasm. Is also involved in ribosome biogenesis. Associates with pre-60S subunits in the nucleus and is involved in its nuclear export. The sequence is that of Eukaryotic translation initiation factor 6 from Candida albicans (strain SC5314 / ATCC MYA-2876) (Yeast).